The sequence spans 300 residues: Ribosomal RNA small subunit methyltransferase H (300 aa).

Residues 43–45, aspartate 60, aspartate 105, and glutamine 112 each bind S-adenosyl-L-methionine; that span reads AGH.

This sequence belongs to the methyltransferase superfamily. RsmH family.

Its subcellular location is the cytoplasm. It catalyses the reaction cytidine(1402) in 16S rRNA + S-adenosyl-L-methionine = N(4)-methylcytidine(1402) in 16S rRNA + S-adenosyl-L-homocysteine + H(+). Its function is as follows. Specifically methylates the N4 position of cytidine in position 1402 (C1402) of 16S rRNA. The chain is Ribosomal RNA small subunit methyltransferase H from Deinococcus deserti (strain DSM 17065 / CIP 109153 / LMG 22923 / VCD115).